The chain runs to 228 residues: HTH-type transcriptional regulator TfdT (228 aa).

The HTH lysR-type domain maps to 1–58 (MEIRQLKYFVAVAEAGGFGTAAQRMHISQPPLTRQIQALERDIGAKLFERTARGVELT). Residues 18 to 37 (FGTAAQRMHISQPPLTRQIQ) constitute a DNA-binding region (H-T-H motif).

Belongs to the LysR transcriptional regulatory family.

It localises to the cytoplasm. In terms of biological role, does not seem to be involved in the regulation of 3-chlorocatechol degradation. Does not activate the expression of its presumed target operon, tfdCDEF. The chain is HTH-type transcriptional regulator TfdT (tfdT) from Cupriavidus pinatubonensis (strain JMP 134 / LMG 1197) (Cupriavidus necator (strain JMP 134)).